A 212-amino-acid polypeptide reads, in one-letter code: Adenylate kinase (212 aa).

Residue Gly10–Thr15 participates in ATP binding. The segment at Ala30–Val59 is NMP. Residues Arg36, Glu57–Val59, Gly85–Arg88, and Gln92 contribute to the AMP site. The tract at residues Gly122–Asp160 is LID. Arg123 provides a ligand contact to ATP. 2 residues coordinate Zn(2+): Cys126 and Cys129. Ile132–Tyr133 is an ATP binding site. Cys146 and Cys149 together coordinate Zn(2+). Positions 157 and 168 each coordinate AMP. Lys196 is an ATP binding site.

This sequence belongs to the adenylate kinase family. As to quaternary structure, monomer.

The protein localises to the cytoplasm. The catalysed reaction is AMP + ATP = 2 ADP. Its pathway is purine metabolism; AMP biosynthesis via salvage pathway; AMP from ADP: step 1/1. Catalyzes the reversible transfer of the terminal phosphate group between ATP and AMP. Plays an important role in cellular energy homeostasis and in adenine nucleotide metabolism. This chain is Adenylate kinase, found in Rickettsia akari (strain Hartford).